Consider the following 314-residue polypeptide: tRNA pseudouridine synthase B (314 aa).

Position 43 (His-43) interacts with substrate. Asp-48 acts as the Nucleophile in catalysis. Tyr-76, Tyr-179, and Leu-200 together coordinate substrate.

The protein belongs to the pseudouridine synthase TruB family. Type 1 subfamily.

The enzyme catalyses uridine(55) in tRNA = pseudouridine(55) in tRNA. In terms of biological role, responsible for synthesis of pseudouridine from uracil-55 in the psi GC loop of transfer RNAs. The polypeptide is tRNA pseudouridine synthase B (Enterobacter sp. (strain 638)).